The primary structure comprises 104 residues: Pterin-4-alpha-carbinolamine dehydratase (104 aa).

N-acetylalanine is present on A2. Substrate-binding positions include 61-63 and 78-81; these read DHH and STHD.

Belongs to the pterin-4-alpha-carbinolamine dehydratase family. Homotetramer and homodimer.

It localises to the cytoplasm. Its subcellular location is the nucleus. It carries out the reaction (4aS,6R)-4a-hydroxy-L-erythro-5,6,7,8-tetrahydrobiopterin = (6R)-L-erythro-6,7-dihydrobiopterin + H2O. In terms of biological role, involved in tetrahydrobiopterin biosynthesis. Seems to both prevent the formation of 7-pterins and accelerate the formation of quinonoid-BH2. Coactivator for HNF1A-dependent transcription. Regulates the dimerization of homeodomain protein HNF1A and enhances its transcriptional activity. Also acts as a coactivator for HNF1B-dependent transcription. This Xenopus laevis (African clawed frog) protein is Pterin-4-alpha-carbinolamine dehydratase (pcbd).